Reading from the N-terminus, the 1263-residue chain is Condensin complex subunit dpy-26 (1263 aa).

Over residues 1–10 (MDVPSSSNVT) the composition is skewed to polar residues. The interval 1 to 29 (MDVPSSSNVTGRRKRQVLDDDEDDGFRST) is disordered. A coiled-coil region spans residues 691–725 (NEQMDETEVEERNEQDVQRELEDIALAADEVAELM). Disordered stretches follow at residues 1098 to 1118 (YQAADERPNNQPTTSTYGTAN) and 1225 to 1263 (FSNLMRRPKAVPVRKGRGAGGQPTTSDLGAIVEEEEMEE). The span at 1106–1118 (NNQPTTSTYGTAN) shows a compositional bias: polar residues. The span at 1230 to 1241 (RRPKAVPVRKGR) shows a compositional bias: basic residues.

In terms of assembly, component of the condensin I complex, which contains the mix-1/SMC2 and smc-4/SMC4 heterodimer, and three non SMC subunits that probably regulate the complex: dpy-26, capg-1 and dpy-28. Within the complex, interacts with dpy-28, mix-1, smc-4 and capg-1. Component of the dosage compensation complex, which consists of the condensin I-like components mix-1/SMC2 and dpy-27/SMC4, and the three non SMC subunits dpy-26, capg-1 and dpy-28. Within the complex, interacts with dpy-27, dpy-28, mix-1 and capg-1. The interaction with dpy-27 is required for dpy-27 protein stability. Interacts with smcl-1. As to expression, expressed in embryos and in somatic and germline tissues in L4 stage larvae (at protein level).

It is found in the nucleus. Its subcellular location is the chromosome. Functionally, required for both chromosome condensation and segregation and for X-chromosome dosage compensation depending on its binding partners. Member of the condensin I complex, a complex required for conversion of interphase chromatin into mitotic-like condense chromosomes and for proper chromosome segregation in mitosis and meiosis. As a member of the condensin I complex, further controls the crossover number and distribution in meiosis by restricting double strand break formation, probably by influencing higher-order chromosome structure. Plays a role in robust cytokinesis upon presence of chromatin obstructions. Also a member of the condensin I-like dosage compensation complex that associates specifically with hermaphrodite X chromosomes to reduce their gene transcription during interphase, possibly through chromatin reorganization. As a member of the dosage compensation complex, also binds to regulatory regions of the autosomal her-1 gene, required for male development, possibly contributing to its repression in hermaphrodites. The chain is Condensin complex subunit dpy-26 from Caenorhabditis elegans.